The chain runs to 449 residues: Neuraminidase (449 aa).

The Intravirion segment spans residues 1 to 6; the sequence is MNPNQK. Residues 7-27 traverse the membrane as a helical segment; the sequence is IITIGSICMVIGIVSLMLQIG. Positions 11 to 33 are involved in apical transport and lipid raft association; the sequence is GSICMVIGIVSLMLQIGNMISIW. Topologically, residues 28–449 are virion surface; that stretch reads NMISIWVSHS…GAELPFTIDK (422 aa). A hypervariable stalk region region spans residues 36-70; it reads HSIQTGNQHQAEPISNTNFLTEKAVASVTLAGNSS. Asparagine 68 carries N-linked (GlcNAc...) asparagine; by host glycosylation. The tract at residues 71–449 is head of neuraminidase; the sequence is LCPISGWAVH…GAELPFTIDK (379 aa). Cystine bridges form between cysteine 72–cysteine 397, cysteine 104–cysteine 109, cysteine 164–cysteine 211, cysteine 213–cysteine 218, cysteine 259–cysteine 272, cysteine 261–cysteine 270, cysteine 298–cysteine 315, and cysteine 401–cysteine 426. Arginine 98 serves as a coordination point for substrate. A glycan (N-linked (GlcNAc...) asparagine; by host) is linked at asparagine 126. Residue aspartate 131 is the Proton donor/acceptor of the active site. Substrate is bound at residue arginine 132. The N-linked (GlcNAc...) asparagine; by host glycan is linked to asparagine 215. 257–258 contacts substrate; sequence EE. Arginine 273 is a binding site for substrate. Residues aspartate 274, glycine 278, and aspartate 304 each contribute to the Ca(2+) site. Substrate is bound at residue arginine 348. The active-site Nucleophile is tyrosine 382.

Belongs to the glycosyl hydrolase 34 family. In terms of assembly, homotetramer. It depends on Ca(2+) as a cofactor. Post-translationally, N-glycosylated.

It localises to the virion membrane. The protein localises to the host apical cell membrane. The catalysed reaction is Hydrolysis of alpha-(2-&gt;3)-, alpha-(2-&gt;6)-, alpha-(2-&gt;8)- glycosidic linkages of terminal sialic acid residues in oligosaccharides, glycoproteins, glycolipids, colominic acid and synthetic substrates.. Inhibited by the neuraminidase inhibitors zanamivir (Relenza) and oseltamivir (Tamiflu). These drugs interfere with the release of progeny virus from infected cells and are effective against all influenza strains. Resistance to neuraminidase inhibitors is quite rare. Catalyzes the removal of terminal sialic acid residues from viral and cellular glycoconjugates. Cleaves off the terminal sialic acids on the glycosylated HA during virus budding to facilitate virus release. Additionally helps virus spread through the circulation by further removing sialic acids from the cell surface. These cleavages prevent self-aggregation and ensure the efficient spread of the progeny virus from cell to cell. Otherwise, infection would be limited to one round of replication. Described as a receptor-destroying enzyme because it cleaves a terminal sialic acid from the cellular receptors. May facilitate viral invasion of the upper airways by cleaving the sialic acid moieties on the mucin of the airway epithelial cells. Likely to plays a role in the budding process through its association with lipid rafts during intracellular transport. May additionally display a raft-association independent effect on budding. Plays a role in the determination of host range restriction on replication and virulence. Sialidase activity in late endosome/lysosome traffic seems to enhance virus replication. The protein is Neuraminidase of Influenza A virus (strain A/Chicken/Hong Kong/96.1/2002 H5N1 genotype Y).